A 235-amino-acid chain; its full sequence is Serine protease SplA (235 aa).

Residues 1–35 form the signal peptide; the sequence is MNKNVMVKGLTALDILTSLGCAENISDQPHSIAKA. Catalysis depends on charge relay system residues H74, D113, and S189.

Belongs to the peptidase S1B family.

It is found in the secreted. This is Serine protease SplA (splA) from Staphylococcus aureus.